The primary structure comprises 306 residues: Agmatinase (306 aa).

Mn(2+)-binding residues include His-128, Asp-151, His-153, Asp-155, Asp-232, and Asp-234.

The protein belongs to the arginase family. Agmatinase subfamily. Mn(2+) is required as a cofactor.

It catalyses the reaction agmatine + H2O = urea + putrescine. It functions in the pathway amine and polyamine biosynthesis; putrescine biosynthesis via agmatine pathway; putrescine from agmatine: step 1/1. In terms of biological role, catalyzes the formation of putrescine from agmatine. This is Agmatinase (speB) from Proteus mirabilis.